Reading from the N-terminus, the 841-residue chain is Beta-adaptin-like protein A (841 aa).

Disordered stretches follow at residues 1-25 (MAPP…VSDL) and 650-671 (DENK…LESS). Composition is skewed to polar residues over residues 9–25 (RYPS…VSDL) and 654–671 (GVSN…LESS).

This sequence belongs to the adaptor complexes large subunit family. In terms of assembly, adaptor protein complexes are heterotetramers composed of two large adaptins (beta-type subunit and alpha-type or delta-type or epsilon-type or gamma-type subunit), a medium adaptin (mu-type subunit) and a small adaptin (sigma-type subunit). Interacts with AHK2.

Its subcellular location is the golgi apparatus. It localises to the trans-Golgi network. The protein resides in the cytoplasmic vesicle. It is found in the clathrin-coated vesicle membrane. Functionally, subunit of clathrin-associated adaptor protein complex that plays a role in protein sorting in the late-Golgi/trans-Golgi network (TGN) and/or endosomes. The AP complexes mediate both the recruitment of clathrin to membranes and the recognition of sorting signals within the cytosolic tails of transmembrane cargo molecules. The protein is Beta-adaptin-like protein A (BETAA-AD) of Arabidopsis thaliana (Mouse-ear cress).